Here is a 210-residue protein sequence, read N- to C-terminus: Somatotropin-2 (210 aa).

Residues 1-22 form the signal peptide; that stretch reads MARALVLLSVVLVSLLVNQGRA. Residue histidine 38 participates in Zn(2+) binding. Cysteines 71 and 183 form a disulfide. Position 192 (glutamate 192) interacts with Zn(2+). The cysteines at positions 200 and 208 are disulfide-linked.

The protein belongs to the somatotropin/prolactin family.

The protein localises to the secreted. Growth hormone plays an important role in growth control and is involved in the regulation of several anabolic processes. Implicated as an osmoregulatory substance important for seawater adaptation. In Carassius auratus (Goldfish), this protein is Somatotropin-2 (gh2).